The sequence spans 323 residues: Sphingolipid delta(4)-desaturase/C4-monooxygenase DES2 (323 aa).

Glycine 2 carries the N-myristoyl glycine lipid modification. 2 helical membrane passes run 41-61 (PNIK…CWLV) and 68-88 (WLLF…TLAI). The Histidine box-1 motif lies at 89–93 (HDISH). The tract at residues 95–99 (TAFGT) is required for C4-hydroxylase activity. A Histidine box-2 motif is present at residues 128 to 132 (HVDHH). The helical transmembrane segment at 200 to 220 (IFALWGIKAIVYLLASSLLGL) threads the bilayer. Positions 259 to 263 (HVEHH) match the Histidine box-3 motif.

The protein belongs to the fatty acid desaturase type 1 family. DEGS subfamily.

It is found in the endoplasmic reticulum membrane. The catalysed reaction is a dihydroceramide + 2 Fe(II)-[cytochrome b5] + O2 + 2 H(+) = a phytoceramide + 2 Fe(III)-[cytochrome b5] + H2O. The enzyme catalyses an N-acylsphinganine + 2 Fe(II)-[cytochrome b5] + O2 + 2 H(+) = an N-acylsphing-4-enine + 2 Fe(III)-[cytochrome b5] + 2 H2O. It carries out the reaction N-octanoylsphinganine + 2 Fe(II)-[cytochrome b5] + O2 + 2 H(+) = N-octanoyl-4-hydroxysphinganine + 2 Fe(III)-[cytochrome b5] + H2O. It catalyses the reaction an N-acylsphinganine + 2 Fe(II)-[cytochrome b5] + O2 + 2 H(+) = an N-acyl-(4R)-4-hydroxysphinganine + 2 Fe(III)-[cytochrome b5] + H2O. It participates in membrane lipid metabolism; sphingolipid biosynthesis. Its function is as follows. Bifunctional enzyme which acts both as a sphingolipid delta(4)-desaturase and a sphingolipid C4-monooxygenase. In Rattus norvegicus (Rat), this protein is Sphingolipid delta(4)-desaturase/C4-monooxygenase DES2.